The primary structure comprises 94 residues: Prepro-gonadotropin-releasing hormone-like protein (94 aa).

An N-terminal signal peptide occupies residues 1-21 (MNACILLTTLVTMITIEKVQG).

The protein localises to the secreted. Functionally, neuropeptide involved in reproduction. May be an important hormone in the regulation of gonadal maturation. The polypeptide is Prepro-gonadotropin-releasing hormone-like protein (Ruditapes philippinarum (Japanese carpet shell)).